The primary structure comprises 325 residues: GTPase Era (325 aa).

In terms of domain architecture, Era-type G spans 30 to 198 (HCGFVAIVGR…KKHVRDHLPK (169 aa)). Residues 38-45 (GRPNVGKS) are G1. 38 to 45 (GRPNVGKS) is a binding site for GTP. The tract at residues 64 to 68 (QTTRH) is G2. The interval 85–88 (DTPG) is G3. Residues 85–89 (DTPGL) and 147–150 (NKVD) each bind GTP. Residues 147–150 (NKVD) are G4. The G5 stretch occupies residues 177 to 179 (ISA). The region spanning 221 to 307 (VREKLMRFTG…YLETWVKVKS (87 aa)) is the KH type-2 domain.

The protein belongs to the TRAFAC class TrmE-Era-EngA-EngB-Septin-like GTPase superfamily. Era GTPase family. Monomer.

Its subcellular location is the cytoplasm. The protein localises to the cell inner membrane. Its function is as follows. An essential GTPase that binds both GDP and GTP, with rapid nucleotide exchange. Plays a role in 16S rRNA processing and 30S ribosomal subunit biogenesis and possibly also in cell cycle regulation and energy metabolism. This Vibrio cholerae serotype O1 (strain ATCC 39315 / El Tor Inaba N16961) protein is GTPase Era.